A 333-amino-acid polypeptide reads, in one-letter code: Anthranilate phosphoribosyltransferase (333 aa).

5-phospho-alpha-D-ribose 1-diphosphate-binding positions include Gly81, 84-85 (GD), Thr89, 91-94 (NIST), 109-117 (KHGNRSVSS), and Ala121. Position 81 (Gly81) interacts with anthranilate. Residue Ser93 coordinates Mg(2+). Asn112 is an anthranilate binding site. Anthranilate is bound at residue Arg167. Mg(2+) is bound by residues Asp225 and Glu226.

It belongs to the anthranilate phosphoribosyltransferase family. As to quaternary structure, homodimer. The cofactor is Mg(2+).

The enzyme catalyses N-(5-phospho-beta-D-ribosyl)anthranilate + diphosphate = 5-phospho-alpha-D-ribose 1-diphosphate + anthranilate. It participates in amino-acid biosynthesis; L-tryptophan biosynthesis; L-tryptophan from chorismate: step 2/5. In terms of biological role, catalyzes the transfer of the phosphoribosyl group of 5-phosphorylribose-1-pyrophosphate (PRPP) to anthranilate to yield N-(5'-phosphoribosyl)-anthranilate (PRA). In Haemophilus influenzae (strain PittEE), this protein is Anthranilate phosphoribosyltransferase.